The primary structure comprises 735 residues: Alpha-adducin (735 aa).

Position 1 is an N-acetylmethionine (methionine 1). Residues 1–11 (MNGDTRAAVVT) are compositionally biased toward low complexity. The tract at residues 1–21 (MNGDTRAAVVTSPPPTTAPHK) is disordered. Serine 12, serine 59, and serine 64 each carry phosphoserine. Threonine 331 carries the phosphothreonine modification. Serine 334, serine 353, and serine 355 each carry phosphoserine. Threonine 358 is subject to Phosphothreonine. Phosphoserine is present on residues serine 364, serine 366, serine 408, and serine 427. Disordered regions lie at residues 418–487 (GHSF…AVPN) and 576–735 (RREV…KSDS). Threonine 429 carries the post-translational modification Phosphothreonine. 2 positions are modified to phosphoserine: serine 431 and serine 436. Residues 440 to 455 (QQREKTRWLHSGRGDD) show a composition bias toward basic and acidic residues. Threonine 445 bears the Phosphothreonine; by ROCK2 mark. Phosphoserine is present on residues serine 464 and serine 465. Phosphothreonine; by ROCK2 is present on threonine 480. Serine 481 is modified (phosphoserine; by PKA). The segment covering 576–601 (RREVERKQKGSEENLDETREQKEKSP) has biased composition (basic and acidic residues). 3 positions are modified to phosphoserine: serine 586, serine 600, and serine 605. Phosphothreonine is present on threonine 610. Serine 613 bears the Phosphoserine mark. Threonine 614 is modified (phosphothreonine). Over residues 698–712 (GSPMDPGSDGSPGKS) the composition is skewed to low complexity. 3 positions are modified to phosphoserine: serine 705, serine 708, and serine 712. The span at 713 to 735 (PSKKKKKFRTPSFLKKSKKKSDS) shows a compositional bias: basic residues. At serine 714 the chain carries Phosphoserine; by PKC. The segment at 715–732 (KKKKKFRTPSFLKKSKKK) is interaction with calmodulin. Serine 724 is modified (phosphoserine; by PKA and PKC).

Belongs to the aldolase class II family. Adducin subfamily. In terms of assembly, heterodimer of an alpha and a beta subunit or an alpha and a gamma subunit.

Its subcellular location is the cytoplasm. It localises to the cytoskeleton. The protein localises to the cell membrane. Functionally, membrane-cytoskeleton-associated protein that promotes the assembly of the spectrin-actin network. Binds to calmodulin. This is Alpha-adducin (Add1) from Mus musculus (Mouse).